Consider the following 248-residue polypeptide: E3 SUMO-protein ligase NSE2 (248 aa).

M1 is modified (N-acetylmethionine). Glycyl lysine isopeptide (Lys-Gly) (interchain with G-Cter in SUMO2) cross-links involve residues K92 and K109. Position 118 is a phosphoserine (S118). Glycyl lysine isopeptide (Lys-Gly) (interchain with G-Cter in SUMO2) cross-links involve residues K127 and K132. The SP-RING-type zinc-finger motif lies at 156–242 (VDEDMIVTQS…LRRAIESHKK (87 aa)). C187, H189, C212, and C217 together coordinate Zn(2+).

The protein belongs to the NSE2 family. As to quaternary structure, component of the SMC5-SMC6 complex which consists at least of SMC5, SMC6, NSMCE2, NSMCE1, NSMCE4A or EID3 and NSMCE3. Post-translationally, sumoylated, possibly via autosumoylation.

It is found in the nucleus. The protein resides in the chromosome. It localises to the telomere. Its subcellular location is the PML body. The protein operates within protein modification; protein sumoylation. In terms of biological role, E3 SUMO-protein ligase component of the SMC5-SMC6 complex, a complex involved in DNA double-strand break repair by homologous recombination. Is not be required for the stability of the complex. The complex may promote sister chromatid homologous recombination by recruiting the SMC1-SMC3 cohesin complex to double-strand breaks. Acts as an E3 ligase mediating SUMO attachment to various proteins such as SMC6L1 and TSNAX, the shelterin complex subunits TERF1, TERF2, TINF2 and TERF2IP, RAD51AP1, and maybe the cohesin components RAD21 and STAG2. Required for recruitment of telomeres to PML nuclear bodies. Required for sister chromatid cohesion during prometaphase and mitotic progression. The chain is E3 SUMO-protein ligase NSE2 (NSMCE2) from Bos taurus (Bovine).